The following is a 98-amino-acid chain: NADH-ubiquinone oxidoreductase chain 4L (98 aa).

3 consecutive transmembrane segments (helical) span residues 1–21 (MIPTYMNIMLAFTISLLGMLT), 27–47 (VASLLCLEGMMMSLFIMATLI), and 61–81 (IILLVFAACEAAVGLALLISI).

Belongs to the complex I subunit 4L family. As to quaternary structure, core subunit of respiratory chain NADH dehydrogenase (Complex I) which is composed of 45 different subunits.

Its subcellular location is the mitochondrion inner membrane. The catalysed reaction is a ubiquinone + NADH + 5 H(+)(in) = a ubiquinol + NAD(+) + 4 H(+)(out). Core subunit of the mitochondrial membrane respiratory chain NADH dehydrogenase (Complex I) which catalyzes electron transfer from NADH through the respiratory chain, using ubiquinone as an electron acceptor. Part of the enzyme membrane arm which is embedded in the lipid bilayer and involved in proton translocation. The protein is NADH-ubiquinone oxidoreductase chain 4L (MT-ND4L) of Macaca hecki (Heck's macaque).